A 356-amino-acid polypeptide reads, in one-letter code: GDSL esterase/lipase At5g37690 (356 aa).

Positions 1-18 (MMILRLALAIVISTYATA) are cleaved as a signal peptide. Serine 34 acts as the Nucleophile in catalysis. 2 N-linked (GlcNAc...) asparagine glycosylation sites follow: asparagine 116 and asparagine 291. Active-site residues include aspartate 322 and histidine 325.

It belongs to the 'GDSL' lipolytic enzyme family.

Its subcellular location is the secreted. This chain is GDSL esterase/lipase At5g37690, found in Arabidopsis thaliana (Mouse-ear cress).